Here is a 674-residue protein sequence, read N- to C-terminus: Regulator of G-protein signaling 9 (674 aa).

Residues 30–105 (PETGVRMQNQ…PDGSLYRFQT (76 aa)) enclose the DEP domain. In terms of domain architecture, G protein gamma spans 219-280 (KQTVVAVKKE…NPWITDDTQF (62 aa)). The RGS domain occupies 298–413 (RWAFNFSELI…YARYLKSPIY (116 aa)). Positions 533-573 (SSGLEQKGECSGSMAPRGPSVTESSEASLDTSWPRSRPRAP) are disordered. Positions 553–565 (VTESSEASLDTSW) are enriched in polar residues.

As to quaternary structure, heterodimer with GNB5. Interacts with RGS7BP, leading to regulate the subcellular location of the heterodimer formed with GNB5. Component of the RGS9-1-Gbeta5 complex composed of RGS9 (RGS9-1), Gbeta5 (GNB5) and RGS9BP. Interacts with PDE6G and GNAT1. Post-translationally, retinal isoform 3 is light-dependent phosphorylated at 'Ser-478'. Phosphorylation is decreased by light exposition. As to expression, highly expressed in the caudate and putamen, lower levels found in the hypothalamus and nucleus accumbens and very low levels in cerebellum. Not expressed in globus pallidus or cingulate cortex. Isoform 2 is expressed predominantly in pineal gland and retina. Isoform 3 is expressed in retina (abundant in photoreceptors).

It is found in the membrane. In terms of biological role, inhibits signal transduction by increasing the GTPase activity of G protein alpha subunits thereby driving them into their inactive GDP-bound form. Binds to GNAT1. Involved in phototransduction; key element in the recovery phase of visual transduction. The polypeptide is Regulator of G-protein signaling 9 (RGS9) (Homo sapiens (Human)).